The chain runs to 385 residues: GTP cyclohydrolase 1 type 2 homolog (385 aa).

A divalent metal cation is bound by residues H64, H65, D103, H333, and E337.

It belongs to the GTP cyclohydrolase I type 2/NIF3 family. As to quaternary structure, homohexamer.

This Mycobacterium leprae (strain TN) protein is GTP cyclohydrolase 1 type 2 homolog.